Reading from the N-terminus, the 84-residue chain is MAHKKAGGSTRNGRDSESKRLGVKRFGGESVLAGNIIVRQRGTKFHAGVNVGIGRDHTLFALTDGKVKFEVKGPQNRKFISIED.

The interval 1 to 22 (MAHKKAGGSTRNGRDSESKRLG) is disordered.

This sequence belongs to the bacterial ribosomal protein bL27 family.

In Shewanella pealeana (strain ATCC 700345 / ANG-SQ1), this protein is Large ribosomal subunit protein bL27.